A 234-amino-acid polypeptide reads, in one-letter code: Small ribosomal subunit protein uS2c (234 aa).

Belongs to the universal ribosomal protein uS2 family.

It is found in the plastid. The protein resides in the chloroplast. The protein is Small ribosomal subunit protein uS2c (rps2) of Pinus thunbergii (Japanese black pine).